Consider the following 372-residue polypeptide: Cobalt-precorrin-5B C(1)-methyltransferase (372 aa).

The protein belongs to the CbiD family.

The enzyme catalyses Co-precorrin-5B + S-adenosyl-L-methionine = Co-precorrin-6A + S-adenosyl-L-homocysteine. It functions in the pathway cofactor biosynthesis; adenosylcobalamin biosynthesis; cob(II)yrinate a,c-diamide from sirohydrochlorin (anaerobic route): step 6/10. Its function is as follows. Catalyzes the methylation of C-1 in cobalt-precorrin-5B to form cobalt-precorrin-6A. The chain is Cobalt-precorrin-5B C(1)-methyltransferase from Geobacillus kaustophilus (strain HTA426).